A 129-amino-acid chain; its full sequence is Protein BUNDLE SHEATH DEFECTIVE 2, chloroplastic (129 aa).

Residues 1-43 (MAATASLTTTAPSPPALLKASAPLLISFRPVSRHCKNLCIKTK) constitute a chloroplast transit peptide. Residues 49 to 123 (QSAKKHQKVK…AGFLGGFLST (75 aa)) form a CR-type zinc finger. Zn(2+) is bound by residues C62, C65, N68, C73, C76, C97, C100, E105, C108, and C111.

The protein belongs to the BSD2 chaperone family. As to quaternary structure, interacts with the RuBisCo large subunit (RbcL) assembled as an intermediate complex made of eight RbcL and eight BSD2 subunits. In terms of tissue distribution, expressed in shoot tissues, in both bundle sheath and mesophyll cells.

It is found in the plastid. The protein localises to the chloroplast stroma. Chloroplast chaperone required for RuBisCo complex biogenesis and translational regulation of the RuBisCo large subunit (RbcL). Stabilizes an end-state assembly intermediate of eight RbcL subunits until the small subunits (RBCSs) become available to produce a complete stable RuBisCo complex containing eight small and eight large subunits. Involved in the differentiation of bundle sheath cells, especially chloroplast structure. The protein is Protein BUNDLE SHEATH DEFECTIVE 2, chloroplastic of Zea mays (Maize).